A 415-amino-acid polypeptide reads, in one-letter code: Serine hydroxymethyltransferase (415 aa).

(6S)-5,6,7,8-tetrahydrofolate contacts are provided by residues Leu122 and 126 to 128 (GHL). Lys230 carries the post-translational modification N6-(pyridoxal phosphate)lysine.

It belongs to the SHMT family. In terms of assembly, homodimer. It depends on pyridoxal 5'-phosphate as a cofactor.

Its subcellular location is the cytoplasm. The enzyme catalyses (6R)-5,10-methylene-5,6,7,8-tetrahydrofolate + glycine + H2O = (6S)-5,6,7,8-tetrahydrofolate + L-serine. The protein operates within one-carbon metabolism; tetrahydrofolate interconversion. Its pathway is amino-acid biosynthesis; glycine biosynthesis; glycine from L-serine: step 1/1. Catalyzes the reversible interconversion of serine and glycine with tetrahydrofolate (THF) serving as the one-carbon carrier. This reaction serves as the major source of one-carbon groups required for the biosynthesis of purines, thymidylate, methionine, and other important biomolecules. Also exhibits THF-independent aldolase activity toward beta-hydroxyamino acids, producing glycine and aldehydes, via a retro-aldol mechanism. The chain is Serine hydroxymethyltransferase from Cupriavidus taiwanensis (strain DSM 17343 / BCRC 17206 / CCUG 44338 / CIP 107171 / LMG 19424 / R1) (Ralstonia taiwanensis (strain LMG 19424)).